A 447-amino-acid chain; its full sequence is Glutamate--tRNA ligase 1 (447 aa).

Positions P10 to N20 match the 'HIGH' region motif. Positions K240–R244 match the 'KMSKS' region motif. An ATP-binding site is contributed by K243.

It belongs to the class-I aminoacyl-tRNA synthetase family. Glutamate--tRNA ligase type 1 subfamily. Monomer.

It is found in the cytoplasm. It catalyses the reaction tRNA(Glu) + L-glutamate + ATP = L-glutamyl-tRNA(Glu) + AMP + diphosphate. Functionally, catalyzes the attachment of glutamate to tRNA(Glu) in a two-step reaction: glutamate is first activated by ATP to form Glu-AMP and then transferred to the acceptor end of tRNA(Glu). This is Glutamate--tRNA ligase 1 from Rickettsia massiliae (strain Mtu5).